The primary structure comprises 119 residues: Protein yippee-like 3 (119 aa).

The Yippee domain occupies 19–116 (RRYSCVHCRA…IELSHMIKDN (98 aa)). Residues Cys-23, Cys-26, Cys-79, and Cys-82 each coordinate Zn(2+).

This sequence belongs to the yippee family.

Its subcellular location is the nucleus. The protein resides in the nucleolus. In terms of biological role, may be involved in proliferation and apoptosis in myeloid precursor cells. The protein is Protein yippee-like 3 (ypel3) of Oryzias latipes (Japanese rice fish).